A 560-amino-acid chain; its full sequence is Probable 2,3-bisphosphoglycerate-independent phosphoglycerate mutase 2 (560 aa).

G2 carries the post-translational modification N-acetylglycine. The Mn(2+) site is built by D29 and S82. The active-site Phosphoserine intermediate is S82. Substrate-binding positions include H141, 171–172 (RD), R207, R214, 287–290 (RADR), and K362. Positions 431, 435, 472, 473, and 502 each coordinate Mn(2+).

Belongs to the BPG-independent phosphoglycerate mutase family. In terms of assembly, monomer. Requires Mn(2+) as cofactor.

The protein resides in the cytoplasm. It carries out the reaction (2R)-2-phosphoglycerate = (2R)-3-phosphoglycerate. The protein operates within carbohydrate degradation; glycolysis; pyruvate from D-glyceraldehyde 3-phosphate: step 3/5. Functionally, catalyzes the interconversion of 2-phosphoglycerate (2-PGA) and 3-phosphoglycerate (3-PGA). Required for guard cell function (e.g. blue light-, abscisic acid- (ABA), and low CO(2)-regulated stomatal movements) and fertility (e.g. pollen grains production). The chain is Probable 2,3-bisphosphoglycerate-independent phosphoglycerate mutase 2 (PGM2) from Arabidopsis thaliana (Mouse-ear cress).